Here is a 290-residue protein sequence, read N- to C-terminus: Ribosomal protein L11 methyltransferase (290 aa).

Residues Thr-136, Gly-159, Asp-181, and Asn-228 each coordinate S-adenosyl-L-methionine.

Belongs to the methyltransferase superfamily. PrmA family.

It is found in the cytoplasm. It carries out the reaction L-lysyl-[protein] + 3 S-adenosyl-L-methionine = N(6),N(6),N(6)-trimethyl-L-lysyl-[protein] + 3 S-adenosyl-L-homocysteine + 3 H(+). Functionally, methylates ribosomal protein L11. The sequence is that of Ribosomal protein L11 methyltransferase from Allorhizobium ampelinum (strain ATCC BAA-846 / DSM 112012 / S4) (Agrobacterium vitis (strain S4)).